A 228-amino-acid chain; its full sequence is Abnormal cell migration protein 18 (228 aa).

The N-terminal stretch at 1-19 is a signal peptide; that stretch reads MTFTLRLLVLCTVYSYVIS. Asn135 and Asn159 each carry an N-linked (GlcNAc...) asparagine glycan.

Expressed in body wall muscle.

The protein localises to the secreted. Its subcellular location is the extracellular space. The protein resides in the extracellular matrix. It localises to the basement membrane. Required for the directional control of distal tip cell migration during gonadogenesis, probably by recruiting fibulin fbl-1 to the gonad basement membrane. This chain is Abnormal cell migration protein 18, found in Caenorhabditis elegans.